Here is a 151-residue protein sequence, read N- to C-terminus: UPF0102 protein Ava_4800 (151 aa).

The protein belongs to the UPF0102 family.

This is UPF0102 protein Ava_4800 from Trichormus variabilis (strain ATCC 29413 / PCC 7937) (Anabaena variabilis).